The primary structure comprises 453 residues: Chromosomal replication initiator protein DnaA (453 aa).

A domain I, interacts with DnaA modulators region spans residues 1–78; it reads MTENEQLFWN…FEIFNAEITA (78 aa). Residues 78–112 are domain II; the sequence is ANYVSNDLHLQETSFSNYQQSSNEVNTLPIRKIDS. The interval 113–331 is domain III, AAA+ region; the sequence is NLKEKYTFAN…GALKNISLVA (219 aa). G157, G159, K160, and T161 together coordinate ATP. A domain IV, binds dsDNA region spans residues 332–453; the sequence is DFKHAKTITV…EIETIKNKIR (122 aa).

Belongs to the DnaA family. In terms of assembly, oligomerizes as a right-handed, spiral filament on DNA at oriC.

It is found in the cytoplasm. Its function is as follows. Plays an essential role in the initiation and regulation of chromosomal replication. ATP-DnaA binds to the origin of replication (oriC) to initiate formation of the DNA replication initiation complex once per cell cycle. Binds the DnaA box (a 9 base pair repeat at the origin) and separates the double-stranded (ds)DNA. Forms a right-handed helical filament on oriC DNA; dsDNA binds to the exterior of the filament while single-stranded (ss)DNA is stabiized in the filament's interior. The ATP-DnaA-oriC complex binds and stabilizes one strand of the AT-rich DNA unwinding element (DUE), permitting loading of DNA polymerase. After initiation quickly degrades to an ADP-DnaA complex that is not apt for DNA replication. Binds acidic phospholipids. This is Chromosomal replication initiator protein DnaA from Streptococcus agalactiae serotype Ia (strain ATCC 27591 / A909 / CDC SS700).